A 385-amino-acid polypeptide reads, in one-letter code: Glutamate 5-kinase (385 aa).

An ATP-binding site is contributed by lysine 17. 3 residues coordinate substrate: serine 64, aspartate 151, and asparagine 165. 185–186 (SD) lines the ATP pocket. The region spanning 291-367 (SGTVRVDAGA…DQIENVLGYS (77 aa)) is the PUA domain.

This sequence belongs to the glutamate 5-kinase family.

Its subcellular location is the cytoplasm. The catalysed reaction is L-glutamate + ATP = L-glutamyl 5-phosphate + ADP. The protein operates within amino-acid biosynthesis; L-proline biosynthesis; L-glutamate 5-semialdehyde from L-glutamate: step 1/2. Its function is as follows. Catalyzes the transfer of a phosphate group to glutamate to form L-glutamate 5-phosphate. This chain is Glutamate 5-kinase, found in Methanosarcina mazei (strain ATCC BAA-159 / DSM 3647 / Goe1 / Go1 / JCM 11833 / OCM 88) (Methanosarcina frisia).